Reading from the N-terminus, the 524-residue chain is 2-isopropylmalate synthase (524 aa).

Residues 12–274 (VIIFDTTLRD…WNNIETTMLT (263 aa)) form the Pyruvate carboxyltransferase domain. Mn(2+) is bound by residues Asp-21, His-209, His-211, and Asn-245. A regulatory domain region spans residues 398–524 (KLNSLTVIAG…EAVPAVAAAG (127 aa)).

The protein belongs to the alpha-IPM synthase/homocitrate synthase family. LeuA type 1 subfamily. In terms of assembly, homodimer. It depends on Mn(2+) as a cofactor.

Its subcellular location is the cytoplasm. The catalysed reaction is 3-methyl-2-oxobutanoate + acetyl-CoA + H2O = (2S)-2-isopropylmalate + CoA + H(+). It functions in the pathway amino-acid biosynthesis; L-leucine biosynthesis; L-leucine from 3-methyl-2-oxobutanoate: step 1/4. Catalyzes the condensation of the acetyl group of acetyl-CoA with 3-methyl-2-oxobutanoate (2-ketoisovalerate) to form 3-carboxy-3-hydroxy-4-methylpentanoate (2-isopropylmalate). This Rhodopseudomonas palustris (strain HaA2) protein is 2-isopropylmalate synthase.